We begin with the raw amino-acid sequence, 603 residues long: Elongation factor 4 (603 aa).

Positions 7 to 189 (VRIRNFCIIA…AVVERVPPPP (183 aa)) constitute a tr-type G domain. GTP is bound by residues 19–24 (DHGKST) and 136–139 (NKID).

Belongs to the TRAFAC class translation factor GTPase superfamily. Classic translation factor GTPase family. LepA subfamily.

The protein resides in the cell inner membrane. The enzyme catalyses GTP + H2O = GDP + phosphate + H(+). Its function is as follows. Required for accurate and efficient protein synthesis under certain stress conditions. May act as a fidelity factor of the translation reaction, by catalyzing a one-codon backward translocation of tRNAs on improperly translocated ribosomes. Back-translocation proceeds from a post-translocation (POST) complex to a pre-translocation (PRE) complex, thus giving elongation factor G a second chance to translocate the tRNAs correctly. Binds to ribosomes in a GTP-dependent manner. This is Elongation factor 4 from Nostoc sp. (strain PCC 7120 / SAG 25.82 / UTEX 2576).